Reading from the N-terminus, the 146-residue chain is YNIGNLQCPNAVLQHMSIPQFLGEGKPVVFVRKSESDYGDVVRVMTVVYIKFFVKTTKLCVDQTVWKVNDEQLVVTGGKVGNENDIFKIMKTDLVTPGGSKYVYKLLHCPSHLGCKNIGGNFKNGYPRLVTVDDDKDFIPFVFIKA.

2 disulfides stabilise this stretch: C8–C60 and C109–C115.

The protein belongs to the protease inhibitor I3 (leguminous Kunitz-type inhibitor) family.

The protein resides in the vacuole. In terms of biological role, inhibitor of cysteine proteases. May protect the plant by inhibiting proteases of invading organisms. The protein is Cysteine protease inhibitor 3 of Solanum tuberosum (Potato).